The chain runs to 1028 residues: Unconventional myosin-Ic (1028 aa).

Residue Met1 is modified to N-acetylmethionine. Positions 12 to 696 (GVQDFVLLEN…TLFATEDALE (685 aa)) constitute a Myosin motor domain. ATP contacts are provided by residues Asn53, Tyr61, 104–113 (SGESGAGKTE), and 157–161 (NDNSS). Residue Lys348 is modified to N6-methyllysine. The tract at residues 573-595 (LSKLMEILMSKEPSYIRCIKPND) is actin-binding. IQ domains follow at residues 699–728 (KQSL…SAIA) and 722–751 (MKHS…AVQT). The TH1 domain occupies 850–1024 (KDNYPQSVPR…NGHLTVVAPR (175 aa)).

Belongs to the TRAFAC class myosin-kinesin ATPase superfamily. Myosin family. Interacts (via its IQ motifs) with CALM.

It is found in the cytoplasm. The protein resides in the cell cortex. It localises to the cell projection. The protein localises to the ruffle membrane. Its subcellular location is the cytoplasmic vesicle. It is found in the stereocilium membrane. Its function is as follows. Myosins are actin-based motor molecules with ATPase activity. Unconventional myosins serve in intracellular movements. Their highly divergent tails are presumed to bind to membranous compartments, which would be moved relative to actin filaments. The protein is Unconventional myosin-Ic (MYO1C) of Gallus gallus (Chicken).